The chain runs to 301 residues: Very-long-chain aldehyde decarbonylase GL1-10 (301 aa).

3 helical membrane passes run 36–56 (VLFWHNILFLFVVFTLAPLPV), 94–114 (FFLVIGPLQLVSYPTVKMVGI), and 187–207 (SFVGPALAPGHMITFWLWIVL). The 135-residue stretch at 131-265 (LVYFLVEDYL…FTYCDYLYGT (135 aa)) folds into the Fatty acid hydroxylase domain.

It belongs to the sterol desaturase family. In terms of assembly, homodimer. As to expression, expressed ubiquitously.

The protein resides in the endoplasmic reticulum membrane. The enzyme catalyses a long-chain fatty aldehyde + 2 NADPH + O2 + H(+) = a long-chain alkane + formate + 2 NADP(+) + H2O. Functionally, aldehyde decarbonylase involved in the conversion of aldehydes to alkanes. Core component of a very-long-chain alkane synthesis complex. The sequence is that of Very-long-chain aldehyde decarbonylase GL1-10 from Oryza sativa subsp. japonica (Rice).